Consider the following 1338-residue polypeptide: Fanconi anemia group I protein (1338 aa).

Lys525 participates in a covalent cross-link: Glycyl lysine isopeptide (Lys-Gly) (interchain with G-Cter in ubiquitin). Phosphoserine occurs at positions 558 and 561. A Phosphothreonine modification is found at Thr567.

This sequence belongs to the Fanconi anemia group I protein family. In terms of assembly, homodimer. Part of a FANCI-FANCD2 heterodimeric complex that binds and scans dsDNA for DNA damage. Interacts with FANCL. Interacts with MTMR15/FAN1. Interacts with POLN. Interacts with UBL5; the interaction promotes FANCI homodimerization. In terms of processing, monoubiquitinated by FANCL during S phase and upon genotoxic stress. Deubiquitinated by USP1 as cells enter G2/M, or once DNA repair is completed. Monoubiquitination requires the FANCA-FANCB-FANCC-FANCE-FANCF-FANCG-FANCM complex. Ubiquitination is required for binding to chromatin, DNA repair, and normal cell cycle progression. Monoubiquitination is stimulated by DNA-binding. Phosphorylated in response to DNA damage by ATM and/or ATR. Phosphorylation of FANCI promotes ubiquitination of FANCD2, which prevents DNA release from the FANCI-FANCD2 complex.

In terms of biological role, plays an essential role in the repair of DNA double-strand breaks by homologous recombination and in the repair of interstrand DNA cross-links (ICLs) by promoting FANCD2 monoubiquitination by FANCL and participating in recruitment to DNA repair sites. The FANCI-FANCD2 complex binds and scans double-stranded DNA (dsDNA) for DNA damage; this complex stalls at DNA junctions between double-stranded DNA and single-stranded DNA. Participates in S phase and G2 phase checkpoint activation upon DNA damage. This Gallus gallus (Chicken) protein is Fanconi anemia group I protein.